The primary structure comprises 784 residues: Ribosome biogenesis protein BOP1 homolog (784 aa).

Residues 1 to 11 show a composition bias toward basic residues; sequence MTKKLALKRRG. The segment at 1-159 is disordered; the sequence is MTKKLALKRR…DSDTSDEEDI (159 aa). Composition is skewed to acidic residues over residues 27–36, 45–54, 62–73, and 84–111; these read SENEEEEEDL, EDSTDDEGID, SEELQFESDEEG, and AEEDEESSDEEDNEEEESTDGEEVEDEE. Composition is skewed to basic and acidic residues over residues 112–123 and 138–148; these read KDSKSKQTDDKP and LPKRDSSKPEY. The span at 149 to 158 shows a compositional bias: acidic residues; sequence QDSDTSDEED. 7 WD repeats span residues 445–486, 488–526, 570–612, 615–653, 656–695, 699–738, and 754–784; these read GHTD…RTIE, DEVVRCVAWCPNPKLSIIAVATGNRLLLVNPKVGDKVLV, THFK…SQIP, KSKGLIQFVLFHPVKPCFFVATQHNIRIYDLVKQELVKK, TNSKWISGMSIHPKGDNLLVSTYDKKMLWFDLDLSTKPYQ, LHRNAVRSVAFHLRYPLFASGSDDQAVIVSHGMVYNDLLQ, and RDEFGVLDVNWHPVQPWVFSTGADSTIRLYT.

The protein belongs to the WD repeat BOP1/ERB1 family.

Its subcellular location is the nucleus. It localises to the nucleolus. It is found in the nucleoplasm. Required for maturation of ribosomal RNAs and formation of the large ribosomal subunit. The protein is Ribosome biogenesis protein BOP1 homolog of Drosophila melanogaster (Fruit fly).